Consider the following 323-residue polypeptide: tRNA-dihydrouridine(16) synthase (323 aa).

Residues 7 to 9 (PME) and Q68 each bind FMN. Catalysis depends on C98, which acts as the Proton donor. FMN contacts are provided by residues K139, 199–201 (NGE), and 223–224 (GR).

Belongs to the Dus family. DusC subfamily. The cofactor is FMN.

The catalysed reaction is 5,6-dihydrouridine(16) in tRNA + NADP(+) = uridine(16) in tRNA + NADPH + H(+). It carries out the reaction 5,6-dihydrouridine(16) in tRNA + NAD(+) = uridine(16) in tRNA + NADH + H(+). In terms of biological role, catalyzes the synthesis of 5,6-dihydrouridine (D), a modified base found in the D-loop of most tRNAs, via the reduction of the C5-C6 double bond in target uridines. Specifically modifies U16 in tRNAs. This chain is tRNA-dihydrouridine(16) synthase, found in Pseudomonas putida (strain ATCC 47054 / DSM 6125 / CFBP 8728 / NCIMB 11950 / KT2440).